The primary structure comprises 124 residues: Secretion system apparatus protein SsaP (124 aa).

The polypeptide is Secretion system apparatus protein SsaP (ssaP) (Salmonella typhi).